The sequence spans 342 residues: Nucleoid-associated protein Spea_1765 (342 aa).

It belongs to the YejK family.

The protein localises to the cytoplasm. It is found in the nucleoid. The sequence is that of Nucleoid-associated protein Spea_1765 from Shewanella pealeana (strain ATCC 700345 / ANG-SQ1).